The primary structure comprises 326 residues: Pyruvate dehydrogenase E1 component subunit alpha (326 aa).

As to quaternary structure, heterodimer of an alpha and a beta chain. Requires thiamine diphosphate as cofactor.

The catalysed reaction is N(6)-[(R)-lipoyl]-L-lysyl-[protein] + pyruvate + H(+) = N(6)-[(R)-S(8)-acetyldihydrolipoyl]-L-lysyl-[protein] + CO2. Its function is as follows. The pyruvate dehydrogenase complex catalyzes the overall conversion of pyruvate to acetyl-CoA and CO(2). It contains multiple copies of three enzymatic components: pyruvate dehydrogenase (E1), dihydrolipoamide acetyltransferase (E2) and lipoamide dehydrogenase (E3). The sequence is that of Pyruvate dehydrogenase E1 component subunit alpha (pdhA) from Rickettsia bellii (strain RML369-C).